The following is a 122-amino-acid chain: Small ribosomal subunit protein uS13 (122 aa).

Residues 99–122 are disordered; that stretch reads RGQRTHTNARTRKGPAKAIAGKKK.

Belongs to the universal ribosomal protein uS13 family. In terms of assembly, part of the 30S ribosomal subunit. Forms a loose heterodimer with protein S19. Forms two bridges to the 50S subunit in the 70S ribosome.

Located at the top of the head of the 30S subunit, it contacts several helices of the 16S rRNA. In the 70S ribosome it contacts the 23S rRNA (bridge B1a) and protein L5 of the 50S subunit (bridge B1b), connecting the 2 subunits; these bridges are implicated in subunit movement. Contacts the tRNAs in the A and P-sites. The sequence is that of Small ribosomal subunit protein uS13 from Rhodopseudomonas palustris (strain BisA53).